Consider the following 344-residue polypeptide: 3,4-dihydroxy-2-butanone 4-phosphate synthase (344 aa).

The DHBP synthase stretch occupies residues 1–202 (MILKRVTEAL…VSDLISYRLE (202 aa)). D-ribulose 5-phosphate-binding positions include 27–28 (RE), Asp-32, 139–143 (RTGHT), and Glu-163. Glu-28 is a Mg(2+) binding site. His-142 contributes to the Mg(2+) binding site. Residues 203 to 344 (NESLLKMFCQ…GLKLVETISL (142 aa)) form a GTP cyclohydrolase II-like region.

The protein in the N-terminal section; belongs to the DHBP synthase family. This sequence in the C-terminal section; belongs to the GTP cyclohydrolase II family. Mg(2+) serves as cofactor. It depends on Mn(2+) as a cofactor.

It catalyses the reaction D-ribulose 5-phosphate = (2S)-2-hydroxy-3-oxobutyl phosphate + formate + H(+). It functions in the pathway cofactor biosynthesis; riboflavin biosynthesis; 2-hydroxy-3-oxobutyl phosphate from D-ribulose 5-phosphate: step 1/1. Its function is as follows. Catalyzes the conversion of D-ribulose 5-phosphate to formate and 3,4-dihydroxy-2-butanone 4-phosphate. The sequence is that of 3,4-dihydroxy-2-butanone 4-phosphate synthase (ribB) from Helicobacter pylori (strain ATCC 700392 / 26695) (Campylobacter pylori).